Consider the following 429-residue polypeptide: Putative F-box/kelch-repeat protein At2g21680 (429 aa).

The tract at residues 1–32 (MVLISETSDDGSTGGDHQIKKPKKEEDRNKKL) is disordered. Basic and acidic residues predominate over residues 17-29 (HQIKKPKKEEDRN). The F-box domain maps to 37–84 (QVSLPIPEELILRCFLLVRRCHHPSLSLVCRSFHSLMSKLYDDRLRLG). Kelch repeat units follow at residues 144 to 175 (DIYVIGGRVGEKLLEDVGVGYNKPISGGRRGE), 176 to 221 (TSIR…VIDG), 222 to 267 (KIYV…LTYA), 269 to 313 (MKEK…VVDN), and 315 to 359 (LFCI…DGYK).

The protein is Putative F-box/kelch-repeat protein At2g21680 of Arabidopsis thaliana (Mouse-ear cress).